We begin with the raw amino-acid sequence, 178 residues long: Nascent polypeptide-associated complex subunit alpha (178 aa).

The NAC-A/B domain maps to 20-84 (SKNEKKAREL…AKVDDMNKRI (65 aa)). A compositionally biased stretch (low complexity) spans 87 to 104 (AQAQQEQQEALTKAAADA). The segment at 87–142 (AQAQQEQQEALTKAAADAETADKSPESITNDLQNASLEDKTVEEDEGEVDETGLDS) is disordered. Over residues 112–122 (ESITNDLQNAS) the composition is skewed to polar residues. A compositionally biased stretch (acidic residues) spans 127–139 (TVEEDEGEVDETG). The UBA domain occupies 140–178 (LDSKDIEIIVEQTQVSRAKAVKALRAHKGDMVNAIMELS).

Belongs to the NAC-alpha family. Part of the nascent polypeptide-associated complex (NAC), consisting of EGD2 and EGD1. NAC associates with ribosomes via EGD1.

It localises to the cytoplasm. The protein localises to the nucleus. Functionally, component of the nascent polypeptide-associated complex (NAC), a dynamic component of the ribosomal exit tunnel, protecting the emerging polypeptides from interaction with other cytoplasmic proteins to ensure appropriate nascent protein targeting. The NAC complex also promotes mitochondrial protein import by enhancing productive ribosome interactions with the outer mitochondrial membrane and blocks the inappropriate interaction of ribosomes translating non-secretory nascent polypeptides with translocation sites in the membrane of the endoplasmic reticulum. EGD2 may also be involved in transcription regulation. This is Nascent polypeptide-associated complex subunit alpha (EGD2) from Meyerozyma guilliermondii (strain ATCC 6260 / CBS 566 / DSM 6381 / JCM 1539 / NBRC 10279 / NRRL Y-324) (Yeast).